The chain runs to 382 residues: Succinate--CoA ligase [ADP-forming] subunit beta (382 aa).

The ATP-grasp domain maps to 9-240 (KELFSKYGVK…PRDVTEFEAY (232 aa)). ATP contacts are provided by residues Lys-45, 52–54 (GRG), Val-94, and Glu-99. Mg(2+)-binding residues include Asn-193 and Asp-207. Residues Asn-260 and 317 to 319 (GIT) each bind substrate.

It belongs to the succinate/malate CoA ligase beta subunit family. As to quaternary structure, heterotetramer of two alpha and two beta subunits. Requires Mg(2+) as cofactor.

It carries out the reaction succinate + ATP + CoA = succinyl-CoA + ADP + phosphate. The catalysed reaction is GTP + succinate + CoA = succinyl-CoA + GDP + phosphate. Its pathway is carbohydrate metabolism; tricarboxylic acid cycle; succinate from succinyl-CoA (ligase route): step 1/1. Functionally, succinyl-CoA synthetase functions in the citric acid cycle (TCA), coupling the hydrolysis of succinyl-CoA to the synthesis of either ATP or GTP and thus represents the only step of substrate-level phosphorylation in the TCA. The beta subunit provides nucleotide specificity of the enzyme and binds the substrate succinate, while the binding sites for coenzyme A and phosphate are found in the alpha subunit. This is Succinate--CoA ligase [ADP-forming] subunit beta from Pyrobaculum aerophilum (strain ATCC 51768 / DSM 7523 / JCM 9630 / CIP 104966 / NBRC 100827 / IM2).